Consider the following 394-residue polypeptide: Phosphoglycerate kinase (394 aa).

Substrate-binding positions include 21–23 (DLN), Arg37, 60–63 (HLGR), Arg115, and Arg148. ATP contacts are provided by residues Lys199, Glu321, and 347-350 (GGDT).

The protein belongs to the phosphoglycerate kinase family. In terms of assembly, monomer.

It localises to the cytoplasm. It catalyses the reaction (2R)-3-phosphoglycerate + ATP = (2R)-3-phospho-glyceroyl phosphate + ADP. The protein operates within carbohydrate degradation; glycolysis; pyruvate from D-glyceraldehyde 3-phosphate: step 2/5. The sequence is that of Phosphoglycerate kinase from Azoarcus sp. (strain BH72).